The primary structure comprises 157 residues: Endoribonuclease YbeY (157 aa).

Zn(2+)-binding residues include His121, His125, and His131.

It belongs to the endoribonuclease YbeY family. The cofactor is Zn(2+).

The protein localises to the cytoplasm. Functionally, single strand-specific metallo-endoribonuclease involved in late-stage 70S ribosome quality control and in maturation of the 3' terminus of the 16S rRNA. In Salinispora tropica (strain ATCC BAA-916 / DSM 44818 / JCM 13857 / NBRC 105044 / CNB-440), this protein is Endoribonuclease YbeY.